The primary structure comprises 154 residues: 6,7-dimethyl-8-ribityllumazine synthase (154 aa).

5-amino-6-(D-ribitylamino)uracil-binding positions include W22, 56-58 (AWE), and 80-82 (CVI). 85-86 (DT) lines the (2S)-2-hydroxy-3-oxobutyl phosphate pocket. Residue H88 is the Proton donor of the active site. N113 serves as a coordination point for 5-amino-6-(D-ribitylamino)uracil. R127 provides a ligand contact to (2S)-2-hydroxy-3-oxobutyl phosphate.

This sequence belongs to the DMRL synthase family. In terms of assembly, forms an icosahedral capsid composed of 60 subunits, arranged as a dodecamer of pentamers.

The catalysed reaction is (2S)-2-hydroxy-3-oxobutyl phosphate + 5-amino-6-(D-ribitylamino)uracil = 6,7-dimethyl-8-(1-D-ribityl)lumazine + phosphate + 2 H2O + H(+). It participates in cofactor biosynthesis; riboflavin biosynthesis; riboflavin from 2-hydroxy-3-oxobutyl phosphate and 5-amino-6-(D-ribitylamino)uracil: step 1/2. Functionally, catalyzes the formation of 6,7-dimethyl-8-ribityllumazine by condensation of 5-amino-6-(D-ribitylamino)uracil with 3,4-dihydroxy-2-butanone 4-phosphate. This is the penultimate step in the biosynthesis of riboflavin. The polypeptide is 6,7-dimethyl-8-ribityllumazine synthase (Xanthomonas campestris pv. campestris (strain 8004)).